Consider the following 884-residue polypeptide: MADTSVQKLAAEVGKSVERLIEQFSEAGLKKGQADTVSETEKQQLLDYLKKQHGADKAPTKMTLQRKTVSTLSVPAGGGQSKDVKVEVRKKRTFVKRDDSELVDQAELEAKAKAEADAKAAAEAKQKADAEAQAKAAAEAKAKAEANKAKEKAPQAPAPKPKAELKAETPEAAAARAEAERIKATQEAVLTKKQKEEAAQAAEEAKKLAEVNSKRWAEEERLRLEAEKNGDHHVTTSKVARAAEDSSDMDDEKRGRRARNKPTNKKRGGKDARDGREKHMRNRSTAPQSMAHGFNKPVAAVSRDVRIGETVSVAELAHLMAVKATEIIKQMMKMGSMVTINQILDQETAQMVAEEMGHKVVLLRENELEEQVLGDRDDNVKLETRAPVVTIMGHVDHGKTSLLDYIRRAKVAAGEAGGITQHIGAYHVETDNGMITFLDTPGHAAFTSMRARGAKATDIVILVVAADDGVMPQTIEAIQHAKAGNVPLIVAVNKMDKPDADPERVKSELSQHGVMSDDWGGDNMFVHLSAKTGEGVDELLEGILLQSEVLELKAVREGMAAGVVIESQLDKGRGPVATVLVQSGTLRQGDIVLCGLMYGKIRAMKDENGNAITEAGPSIPVEILGLSGVPSAGDEATVVRDERKAREVALYRQGKFRDVKLARQQKSKLENMFANMEEGEVQELNIVLKADVQGSLEAICDSLTGLSTAEVKVNIIARGVGALTETDATLAAASNAIMVGFNVRADAQARKTIEAESVDLRYYSIIYNLIDEVRAAMTGMLAPEFKQQIIGLAEVRDVFKSPKIGAIAGCMVTEGIVKRSAPIRVLRDNVVIYEGELESLRRFKDDATEVRNGMECGIGVKNYNDVRVGDQIEVFETIEVARTL.

Basic and acidic residues-rich tracts occupy residues 110–153 (AKAK…KEKA) and 193–234 (KQKE…DHHV). A disordered region spans residues 110 to 291 (AKAKAEADAK…NRSTAPQSMA (182 aa)). The segment covering 255–268 (GRRARNKPTNKKRG) has biased composition (basic residues). In terms of domain architecture, tr-type G spans 384–553 (TRAPVVTIMG…LLQSEVLELK (170 aa)). The segment at 393-400 (GHVDHGKT) is G1. 393–400 (GHVDHGKT) is a GTP binding site. The G2 stretch occupies residues 418-422 (GITQH). A G3 region spans residues 439-442 (DTPG). GTP contacts are provided by residues 439-443 (DTPGH) and 493-496 (NKMD). The segment at 493–496 (NKMD) is G4. A G5 region spans residues 529-531 (SAK).

This sequence belongs to the TRAFAC class translation factor GTPase superfamily. Classic translation factor GTPase family. IF-2 subfamily.

It is found in the cytoplasm. Its function is as follows. One of the essential components for the initiation of protein synthesis. Protects formylmethionyl-tRNA from spontaneous hydrolysis and promotes its binding to the 30S ribosomal subunits. Also involved in the hydrolysis of GTP during the formation of the 70S ribosomal complex. The protein is Translation initiation factor IF-2 of Shewanella denitrificans (strain OS217 / ATCC BAA-1090 / DSM 15013).